The chain runs to 380 residues: GPI-anchor transamidase (380 aa).

Residues 1–19 form the signal peptide; it reads MIVQFVALLLLNLLQIIAA. Residues 20-354 lie on the Lumenal side of the membrane; that stretch reads ESSHTNNWAV…TRELKYKKHP (335 aa). Residues histidine 145 and cysteine 187 contribute to the active site. N-linked (GlcNAc...) asparagine glycosylation occurs at asparagine 307. Residues 355–375 traverse the membrane as a helical segment; the sequence is ISRIISAVVCISFSIGFPYYA. At 376-380 the chain is on the cytoplasmic side; it reads SKYLK.

It belongs to the peptidase C13 family. As to quaternary structure, forms a complex with PIG-T homolog, PIG-U homolog and PIG-S homolog. In terms of processing, the disulfide bond between PIGK/GPI8 and PIGT is important for normal enzyme activity.

It is found in the endoplasmic reticulum membrane. It functions in the pathway glycolipid biosynthesis; glycosylphosphatidylinositol-anchor biosynthesis. Mediates GPI anchoring in the endoplasmic reticulum, by replacing a protein's C-terminal GPI attachment signal peptide with a pre-assembled GPI. During this transamidation reaction, the GPI transamidase forms a carbonyl intermediate with the substrate protein. This chain is GPI-anchor transamidase (gpi8), found in Schizosaccharomyces pombe (strain 972 / ATCC 24843) (Fission yeast).